The chain runs to 1000 residues: Integrin alpha-PS5 (1000 aa).

FG-GAP repeat units follow at residues lysine 15–serine 74, histidine 75–proline 137, serine 145–glycine 198, serine 199–valine 261, arginine 262–glutamate 323, lysine 324–aspartate 379, and aspartate 386–arginine 448. The N-linked (GlcNAc...) asparagine glycan is linked to asparagine 58. Residue asparagine 231 is glycosylated (N-linked (GlcNAc...) asparagine). N-linked (GlcNAc...) asparagine glycosylation is found at asparagine 516, asparagine 592, asparagine 622, asparagine 732, asparagine 771, asparagine 829, asparagine 842, asparagine 853, and asparagine 922. A helical membrane pass occupies residues isoleucine 930–isoleucine 950. Topologically, residues leucine 951 to asparagine 1000 are cytoplasmic. Positions glutamate 971–alanine 980 are enriched in basic and acidic residues. The tract at residues glutamate 971–asparagine 1000 is disordered.

This sequence belongs to the integrin alpha chain family. In terms of assembly, heterodimer of an alpha and a beta subunit. Alpha-PS5 associates with beta-PS. As to expression, expressed in all follicle cells overlying the oocyte during mid-oogenesis, the strongest expression is observed in the cells covering the anterior end of the oocyte and in the cells forming the dorsal appendages. After completion of oocyte enlargement, expression in main body follicle cells is down-regulated but persists strongly in the dorsal appendage forming cells. Expressed in lamellocytes.

Its subcellular location is the membrane. Possible role in cell-cell interactions. Minor involvement in the establishment of the oocyte anterior-posterior length. This chain is Integrin alpha-PS5, found in Drosophila melanogaster (Fruit fly).